The sequence spans 235 residues: Protocatechuate 3,4-dioxygenase beta chain (235 aa).

Positions 107, 146, 159, and 161 each coordinate Fe cation.

The protein belongs to the intradiol ring-cleavage dioxygenase family. As to quaternary structure, the enzyme is an oligomer of 12 copies of the alpha and beta chains. Fe(3+) serves as cofactor.

It catalyses the reaction 3,4-dihydroxybenzoate + O2 = 3-carboxy-cis,cis-muconate + 2 H(+). The protein operates within aromatic compound metabolism; beta-ketoadipate pathway; 3-carboxy-cis,cis-muconate from 3,4-dihydroxybenzoate: step 1/1. Functionally, plays an essential role in the utilization of numerous aromatic and hydroaromatic compounds via the beta-ketoadipate pathway. The chain is Protocatechuate 3,4-dioxygenase beta chain (pcaH) from Burkholderia cepacia (Pseudomonas cepacia).